Reading from the N-terminus, the 163-residue chain is Bacterial microcompartment assembly protein PduM (163 aa).

It belongs to the PduM family. As to quaternary structure, interacts with shell protein PduK.

The protein resides in the bacterial microcompartment. The protein operates within polyol metabolism; 1,2-propanediol degradation. Its function is as follows. Plays an essential role in assembly and/or stability of the bacterial microcompartment (BMC) dedicated to 1,2-propanediol (1,2-PD) degradation. In terms of biological role, expression of a cosmid containing the full 21-gene pdu operon in E.coli allows E.coli to grow on 1,2-propanediol (1,2-PD) with the appearance of bacterial microcompartments (BMC) in its cytoplasm. Functionally, the 1,2-PD-specific bacterial microcompartment (BMC) concentrates low levels of 1,2-PD catabolic enzymes, concentrates volatile reaction intermediates thus enhancing pathway flux and keeps the level of toxic, mutagenic propionaldehyde low. In Citrobacter freundii, this protein is Bacterial microcompartment assembly protein PduM.